The following is a 163-amino-acid chain: Large ribosomal subunit protein uL15 (163 aa).

Belongs to the universal ribosomal protein uL15 family. Part of the 50S ribosomal subunit.

In terms of biological role, binds to the 23S rRNA. This Orientia tsutsugamushi (strain Boryong) (Rickettsia tsutsugamushi) protein is Large ribosomal subunit protein uL15.